The primary structure comprises 678 residues: MPTWGARPASPDRFAVSAEAENKVREQQPHVERIFSVGVSVLPKDCPDNPHIWLQLEGPKENASRAKEYLKGLCSPELQDEIHYPPKLHCIFLGAQGFFLDCLAWSTSAHLVPRAPGSLMISGLTEAFVMAQSRVEELAERLSWDFTPGPSSGASQCTGVLRDFSALLQSPGDAHREALLQLPLAVQEELLSLVQEASSGQGPGALASWEGRSSALLGAQCQGVRAPPSDGRESLDTGSMGPGDCRGARGDTYAVEKEGGKQGGPREMDWGWKELPGEEAWEREVALRPQSVGGGARESAPLKGKALGKEEIALGGGGFCVHREPPGAHGSCHRAAQSRGASLLQRLHNGNASPPRVPSPPPAPEPPWHCGDRGDCGDRGDVGDRGDKQQGMARGRGPQWKRGARGGNLVTGTQRFKEALQDPFTLCLANVPGQPDLRHIVIDGSNVAMVHGLQHYFSSRGIAIAVQYFWDRGHRDITVFVPQWRFSKDAKVRESHFLQKLYSLSLLSLTPSRVMDGKRISSYDDRFMVKLAEETDGIIVSNDQFRDLAEESEKWMAIIRERLLPFTFVGNLFMVPDDPLGRNGPTLDEFLKKPARTQGSSKAQHPSRGFAEHGKQQQGREEEKGSGGIRKTRETERLRRQLLEVFWGQDHKVDFILQREPYCRDINQLSEALLSLNF.

At Ser-10 the chain carries Phosphoserine. 2 disordered regions span residues Gln-222–Asp-251 and Leu-347–Gly-407. Residues Pro-355–Pro-367 are compositionally biased toward pro residues. Ser-359 bears the Phosphoserine mark. A compositionally biased stretch (basic and acidic residues) spans Cys-370–Lys-388. Residues Leu-437–Glu-589 form the RNase NYN domain. The segment at Ala-595–Arg-633 is disordered. Positions Phe-610 to Arg-633 are enriched in basic and acidic residues.

The protein belongs to the N4BP1 family.

The polypeptide is Protein KHNYN (KHNYN) (Homo sapiens (Human)).